A 369-amino-acid chain; its full sequence is S-adenosyl-L-methionine-dependent uroporphyrinogen III methyltransferase, chloroplastic (369 aa).

Residues 1–28 (MALVQRIPISSSSIRNWQQARTNLTPIC) constitute a chloroplast transit peptide. S-adenosyl-L-homocysteine contacts are provided by residues P124, 200-202 (GGD), 230-231 (TA), M284, and T341.

This sequence belongs to the precorrin methyltransferase family. Mostly expressed in leaves, and, to a lower extent, in stems, flowers and siliques.

The protein localises to the plastid. Its subcellular location is the chloroplast. It catalyses the reaction uroporphyrinogen III + 2 S-adenosyl-L-methionine = precorrin-2 + 2 S-adenosyl-L-homocysteine + H(+). It functions in the pathway porphyrin-containing compound metabolism; siroheme biosynthesis; precorrin-2 from uroporphyrinogen III: step 1/1. Functionally, essential protein required for siroheme biosynthesis. Catalyzes the two successive C-2 and C-7 methylation reactions involved in the conversion of uroporphyrinogen III to precorrin-2 via the intermediate formation of precorrin-1. It is a step in the biosynthesis of siroheme. Promotes nitrogen and sulfur assimilation as well as photosynthesis efficiency by triggering chlorophyll, nitrite reductase (NiR) and sulfite reductase (SiR) biosynthesis. In Arabidopsis thaliana (Mouse-ear cress), this protein is S-adenosyl-L-methionine-dependent uroporphyrinogen III methyltransferase, chloroplastic.